Reading from the N-terminus, the 659-residue chain is UDP-glucuronate:xylan alpha-glucuronosyltransferase 1 (659 aa).

Residues 1-14 (MANSPAAPAPTTTT) show a composition bias toward low complexity. The disordered stretch occupies residues 1–20 (MANSPAAPAPTTTTGGDSRR). The chain crosses the membrane as a helical; Signal-anchor for type II membrane protein span at residues 70–90 (FQIVKLLLFILLSATLFTIIY). D416 and D418 together coordinate Mn(2+). Substrate contacts are provided by residues 416–418 (DAD), 445–447 (NSG), 472–476 (NGGDQ), and 526–531 (HYLGMK). H526 serves as a coordination point for Mn(2+).

This sequence belongs to the glycosyltransferase 8 family. Glycogenin subfamily. The cofactor is Mn(2+).

The protein localises to the golgi apparatus membrane. Its function is as follows. Glycosyltransferase required for the addition of both glucuronic acid and 4-O-methylglucuronic acid branches to xylan in stem cell walls. In association with GUX2, is responsible for almost all of the substitutions of the xylan backbone in stem glucuronoxylan. In Arabidopsis thaliana (Mouse-ear cress), this protein is UDP-glucuronate:xylan alpha-glucuronosyltransferase 1 (GUX1).